A 435-amino-acid chain; its full sequence is Glutamyl-tRNA reductase (435 aa).

Substrate is bound by residues 49–52, serine 114, 119–121, and glutamine 125; these read TCNR and EPQ. The active-site Nucleophile is cysteine 50. Position 204–209 (204–209) interacts with NADP(+); that stretch reads GAGETI.

The protein belongs to the glutamyl-tRNA reductase family. As to quaternary structure, homodimer.

The enzyme catalyses (S)-4-amino-5-oxopentanoate + tRNA(Glu) + NADP(+) = L-glutamyl-tRNA(Glu) + NADPH + H(+). Its pathway is porphyrin-containing compound metabolism; protoporphyrin-IX biosynthesis; 5-aminolevulinate from L-glutamyl-tRNA(Glu): step 1/2. Catalyzes the NADPH-dependent reduction of glutamyl-tRNA(Glu) to glutamate 1-semialdehyde (GSA). The protein is Glutamyl-tRNA reductase of Actinobacillus succinogenes (strain ATCC 55618 / DSM 22257 / CCUG 43843 / 130Z).